We begin with the raw amino-acid sequence, 323 residues long: Viral cathepsin (323 aa).

A signal peptide spans 1–16 (MNKILFYLFVYGVVNS). A propeptide spans 17–112 (AAYDLLKAPN…IVLDQPPGKG (96 aa)) (activation peptide). 3 cysteine pairs are disulfide-bonded: cysteine 133–cysteine 174, cysteine 167–cysteine 207, and cysteine 262–cysteine 310. Cysteine 136 is a catalytic residue. Asparagine 158 carries N-linked (GlcNAc...) asparagine; by host glycosylation. Catalysis depends on residues histidine 269 and asparagine 289.

The protein belongs to the peptidase C1 family. Synthesized as an inactive proenzyme and activated by proteolytic removal of the inhibitory propeptide.

It catalyses the reaction Endopeptidase of broad specificity, hydrolyzing substrates of both cathepsin L and cathepsin B.. Its function is as follows. Cysteine protease that plays an essential role in host liquefaction to facilitate horizontal transmission of the virus. May participate in the degradation of foreign protein expressed by the baculovirus system. This Helicoverpa zea (Corn earworm moth) protein is Viral cathepsin (VCATH).